The sequence spans 726 residues: Dipeptidyl-peptidase 5 (726 aa).

Residues 1-19 (MAPAKWLIASLAFASTGLA) form the signal peptide. 2 N-linked (GlcNAc...) asparagine glycosylation sites follow: Asn-96 and Asn-252. Positions 268–292 (VAEPINKRNGPRTPHGIEGASSSPV) are disordered. Asn-485 is a glycosylation site (N-linked (GlcNAc...) asparagine). Ser-558 serves as the catalytic Charge relay system. N-linked (GlcNAc...) asparagine glycosylation occurs at Asn-605. Active-site charge relay system residues include Asp-641 and His-673. An N-linked (GlcNAc...) asparagine glycan is attached at Asn-699.

It belongs to the peptidase S9C family.

It localises to the secreted. In terms of biological role, extracellular dipeptidyl-peptidase which removes N-terminal dipeptides sequentially from polypeptides having unsubstituted N-termini. Contributes to pathogenicity. The sequence is that of Dipeptidyl-peptidase 5 (DPP5) from Arthroderma otae (strain ATCC MYA-4605 / CBS 113480) (Microsporum canis).